The sequence spans 481 residues: Phosphoenolpyruvate phosphatase (481 aa).

The signal sequence occupies residues 1-36 (MPIYTSRSCFYLLLFHIILLCSVDKTLCRQTSSFVR). Residue Asn-109 is glycosylated (N-linked (GlcNAc...) asparagine). The Fe cation site is built by Asp-168, Asp-195, and Tyr-198. Asp-195 contributes to the Zn(2+) binding site. Residue Asn-206 is glycosylated (N-linked (GlcNAc...) asparagine). The Zn(2+) site is built by Asn-232 and His-317. Asn-232 lines the substrate pocket. His-327 acts as the Proton donor in catalysis. His-354 provides a ligand contact to Zn(2+). 354–356 (HVH) provides a ligand contact to substrate. Residue His-356 coordinates Fe cation. Asn-370 and Asn-427 each carry an N-linked (GlcNAc...) asparagine glycan.

The protein belongs to the metallophosphoesterase superfamily. Purple acid phosphatase family.

The protein resides in the vacuole lumen. The enzyme catalyses phosphoenolpyruvate + H2O = pyruvate + phosphate. Its function is as follows. Phosphoenolpyruvate phosphatase that probably operates in the vacuole to release phosphate from phosphoenolpyruvate (PEP) under phosphorus starvation. The polypeptide is Phosphoenolpyruvate phosphatase (ACPEPP) (Allium cepa (Onion)).